The chain runs to 28 residues: Conotoxin Cl1.2 (28 aa).

Contains 2 disulfide bonds. In terms of tissue distribution, expressed by the venom duct.

It is found in the secreted. The chain is Conotoxin Cl1.2 from Californiconus californicus (California cone).